Reading from the N-terminus, the 396-residue chain is Argininosuccinate synthase (396 aa).

6 to 14 (AYSGGLDTS) contacts ATP. L-citrulline is bound at residue Tyr83. Gly113 contributes to the ATP binding site. L-aspartate-binding residues include Thr115, Asn119, and Asp120. Asn119 serves as a coordination point for L-citrulline. L-citrulline-binding residues include Arg123, Ser171, Ser180, Glu256, and Tyr268.

The protein belongs to the argininosuccinate synthase family. Type 1 subfamily. Homotetramer.

The protein resides in the cytoplasm. It catalyses the reaction L-citrulline + L-aspartate + ATP = 2-(N(omega)-L-arginino)succinate + AMP + diphosphate + H(+). It participates in amino-acid biosynthesis; L-arginine biosynthesis; L-arginine from L-ornithine and carbamoyl phosphate: step 2/3. This Hyperthermus butylicus (strain DSM 5456 / JCM 9403 / PLM1-5) protein is Argininosuccinate synthase.